The chain runs to 433 residues: Protein translocase subunit SecY (433 aa).

A run of 10 helical transmembrane segments spans residues 17-37, 71-91, 117-137, 141-161, 184-204, 212-232, 268-288, 309-329, 366-386, and 388-408; these read IIFT…PIAG, IFAL…LMSV, LTVL…ESIV, GPVV…TLVV, LIIF…MFEL, PLVA…IIFF, GVIP…LANF, IYIL…TAIV, LTVV…LLMN, and YVIS…VVLD.

This sequence belongs to the SecY/SEC61-alpha family. Component of the Sec protein translocase complex. Heterotrimer consisting of SecY, SecE and SecG subunits. The heterotrimers can form oligomers, although 1 heterotrimer is thought to be able to translocate proteins. Interacts with the ribosome. Interacts with SecDF, and other proteins may be involved. Interacts with SecA.

The protein localises to the cell inner membrane. Its function is as follows. The central subunit of the protein translocation channel SecYEG. Consists of two halves formed by TMs 1-5 and 6-10. These two domains form a lateral gate at the front which open onto the bilayer between TMs 2 and 7, and are clamped together by SecE at the back. The channel is closed by both a pore ring composed of hydrophobic SecY resides and a short helix (helix 2A) on the extracellular side of the membrane which forms a plug. The plug probably moves laterally to allow the channel to open. The ring and the pore may move independently. In Rickettsia bellii (strain RML369-C), this protein is Protein translocase subunit SecY.